The sequence spans 374 residues: Ribosomal RNA large subunit methyltransferase G (374 aa).

This sequence belongs to the methyltransferase superfamily. RlmG family.

The protein localises to the cytoplasm. The catalysed reaction is guanosine(1835) in 23S rRNA + S-adenosyl-L-methionine = N(2)-methylguanosine(1835) in 23S rRNA + S-adenosyl-L-homocysteine + H(+). Specifically methylates the guanine in position 1835 (m2G1835) of 23S rRNA. The chain is Ribosomal RNA large subunit methyltransferase G from Pseudomonas paraeruginosa (strain DSM 24068 / PA7) (Pseudomonas aeruginosa (strain PA7)).